Here is a 558-residue protein sequence, read N- to C-terminus: INCREASED PETAL GROWTH ANISOTROPY 1-like protein 2 (558 aa).

Residues 1 to 15 (MSRISTTSTTPSRVR) show a composition bias toward low complexity. Positions 1–54 (MSRISTTSTTPSRVRAANSHYSVISKPRAQDDNGLTGGKPKSSGYDVKNDPAKR) are disordered. Residues 104-180 (VMATAAAEDE…EAKISSLSSN (77 aa)) are a coiled coil. The segment at 207-285 (KVKKEVAVES…AARAQKSPPV (79 aa)) is disordered. Pro residues-rich tracts occupy residues 221 to 236 (PPSPSPSRLPPTPPLP) and 256 to 272 (FAPPTPPPPPPPPPPRP). Residues 392–448 (KADTLQEAAVEYRELKKLEKELSSYSDDPNIHYGVALKKMANLLDKSEQRIRRLVRL) are a coiled coil.

The protein belongs to the IPGA1 family.

The protein resides in the cytoplasm. The protein localises to the cytoskeleton. In terms of biological role, microtubule-associated protein probably involved in the regulation of microtubule organization. The sequence is that of INCREASED PETAL GROWTH ANISOTROPY 1-like protein 2 from Arabidopsis thaliana (Mouse-ear cress).